A 520-amino-acid polypeptide reads, in one-letter code: Cryptochrome DASH (520 aa).

The region spanning 5–141 (RTVICLLRND…RVQTFWGSTL (137 aa)) is the Photolyase/cryptochrome alpha/beta domain. The disordered stretch occupies residues 479-504 (SRHVNNKSSGPSSSKGRKGSSYTARQ).

The protein belongs to the DNA photolyase class-1 family. Requires FAD as cofactor. (6R)-5,10-methylene-5,6,7,8-tetrahydrofolate is required as a cofactor.

May have a photoreceptor function. Has weak cyclobutyl pyrimidine photolyase activity when expressed in E.coli and when tested in vitro. This is Cryptochrome DASH (cry-dash) from Danio rerio (Zebrafish).